Reading from the N-terminus, the 553-residue chain is Phospholipase B-like 1 (553 aa).

An N-terminal signal peptide occupies residues 1 to 38 (MTRGGPGGRPGLPQPPPLLLLLLLLPLLLVTAEPPKPA). N71 carries N-linked (GlcNAc...) (high mannose) asparagine; alternate glycosylation. N71 carries N-linked (GlcNAc...) (hybrid) asparagine; alternate glycosylation. A propeptide spans 209–227 (LSPTKNGSLKVFKRWDMGH) (removed in mature form). 2 N-linked (GlcNAc...) (high mannose) asparagine; alternate glycosylation sites follow: N308 and N366. Residues N308 and N366 are each glycosylated (N-linked (GlcNAc...) (hybrid) asparagine; alternate). N-linked (GlcNAc...) asparagine glycosylation is present at N411. Intrachain disulfides connect C470–C475 and C474–C489. An N-linked (GlcNAc...) (high mannose) asparagine; alternate glycan is attached at N526. N526 carries an N-linked (GlcNAc...) (hybrid) asparagine; alternate glycan.

This sequence belongs to the phospholipase B-like family. In terms of assembly, may form a homodimer, each monomer is composed of a chain A and a chain B. The maturation cleavages that produces chains A and B are required to open the putative substrate binding pocket. Both chains A and B remain associated in the mature protein. Expressed in neutrophils and monocytes.

The protein resides in the lysosome. Its function is as follows. In view of the small size of the putative binding pocket, it has been proposed that it may act as an amidase or a peptidase. Exhibits a weak phospholipase activity, acting on various phospholipids, including phosphatidylcholine, phosphatidylinositol, phosphatidylethanolamine and lysophospholipids. The polypeptide is Phospholipase B-like 1 (PLBD1) (Homo sapiens (Human)).